Reading from the N-terminus, the 413-residue chain is MDFLRKLPLGLTIHLSLFLLSLLYALNAGRLPELKDYIIYFKVRLEGQWELSEDGVSAPVFVEESEIEFLKGRKAFLFVKKARYIPKGSRFELFGNVRVKKNRVFISAYIWDLERLPEKKNIRDFLMEKFKEKVKDEHLRAIGLAFLFGESKRNLPAEVERVFLHTGLIHVLVVSGLHVGLVFLILSRLLPRFYGEVLGLVGVLFYSAFLVPHNPPVIRATSMLFLWVLSFLSFRRYCSLCVLFFTGTLMLFFFPHFSYSYSFWLSFFAVLYILLVLKDFEGGNTSKALMVSLGAFTGTAPLIASFSFVTPLSVLLTPVLSPLIFAYALFGVLSLLTLFSFPPSLILMNLSGELIFRVLEFFSDFSPKILSNVKPEEAFILLILGAIGLYVTKGYSKLLPLGVVNLYLIFKIN.

The next 7 helical transmembrane spans lie at 10–32 (GLTI…GRLP), 162–184 (VFLH…LVFL), 189–211 (LLPR…AFLV), 232–254 (LSFR…LFFF), 259–276 (YSYS…ILLV), 288–310 (ALMV…SFVT), and 325–347 (FAYA…SLIL).

Its subcellular location is the cell membrane. This is an uncharacterized protein from Aquifex aeolicus (strain VF5).